The primary structure comprises 341 residues: Probable sulfurtransferase (341 aa).

Positions 40, 42, 58, and 61 each coordinate Zn(2+). Gly88 serves as a coordination point for ATP. Positions 176 and 179 each coordinate [4Fe-4S] cluster. Arg183 and Gly202 together coordinate ATP. Cys267 is a [4Fe-4S] cluster binding site. Zn(2+)-binding residues include Cys316, Cys319, Cys328, and Cys331.

It belongs to the TtcA family. The cofactor is [4Fe-4S] cluster. Mg(2+) is required as a cofactor.

The chain is Probable sulfurtransferase from Methanocaldococcus jannaschii (strain ATCC 43067 / DSM 2661 / JAL-1 / JCM 10045 / NBRC 100440) (Methanococcus jannaschii).